An 84-amino-acid polypeptide reads, in one-letter code: Large ribosomal subunit protein bL27 (84 aa).

Residues 1-21 (MAHKKGGGSTKNGRDSNPKYL) form a disordered region.

It belongs to the bacterial ribosomal protein bL27 family.

This is Large ribosomal subunit protein bL27 from Pelodictyon phaeoclathratiforme (strain DSM 5477 / BU-1).